Consider the following 548-residue polypeptide: Membrane protein insertase YidC (548 aa).

Residues 6-26 traverse the membrane as a helical segment; the sequence is NLLIIALLFVSFMIWQAWEQD. The segment at 28-52 is disordered; that stretch reads NPQPQQQTTQTTTTAAGSAADQGVP. Over residues 29–41 the composition is skewed to low complexity; that stretch reads PQPQQQTTQTTTT. The next 4 membrane-spanning stretches (helical) occupy residues 345–365, 420–440, 458–478, and 499–519; these read KFIH…TFIV, LGGC…YYML, LSAQ…MFFI, and PVIF…YYIV.

This sequence belongs to the OXA1/ALB3/YidC family. Type 1 subfamily. In terms of assembly, interacts with the Sec translocase complex via SecD. Specifically interacts with transmembrane segments of nascent integral membrane proteins during membrane integration.

It is found in the cell inner membrane. Required for the insertion and/or proper folding and/or complex formation of integral membrane proteins into the membrane. Involved in integration of membrane proteins that insert both dependently and independently of the Sec translocase complex, as well as at least some lipoproteins. Aids folding of multispanning membrane proteins. This is Membrane protein insertase YidC from Klebsiella pneumoniae subsp. pneumoniae (strain ATCC 700721 / MGH 78578).